A 395-amino-acid polypeptide reads, in one-letter code: F-box/kelch-repeat protein At4g39570 (395 aa).

Residues 1–25 show a composition bias toward basic residues; sequence MSSPERKRKRVTSTKNPSVKKKKKI. Positions 1–29 are disordered; the sequence is MSSPERKRKRVTSTKNPSVKKKKKISPVP. Residues 29 to 75 enclose the F-box domain; that stretch reads PTPIPSLPDDLLVSIFARVSRLYYPILSLVSKSFRSLLRSPELYETR. Kelch repeat units follow at residues 150–197 and 198–246; these read DIYF…VIDG and KIYV…RSAY.

This Arabidopsis thaliana (Mouse-ear cress) protein is F-box/kelch-repeat protein At4g39570.